A 635-amino-acid chain; its full sequence is Probable retaining alpha-galactosidase (635 aa).

An N-terminal signal peptide occupies residues 1-30 (MARSVRRTTLALLLSAVLAMTLFVTAPAHA). A Ca(2+)-binding site is contributed by Asp179. Residue Asp397 is the Nucleophile of the active site. Ca(2+)-binding residues include Glu446 and Glu452. The active-site Proton donor/acceptor is the Glu452.

This sequence belongs to the glycosyl hydrolase 97 family. The cofactor is Ca(2+).

It carries out the reaction Hydrolysis of terminal, non-reducing alpha-D-galactose residues in alpha-D-galactosides, including galactose oligosaccharides, galactomannans and galactolipids.. The polypeptide is Probable retaining alpha-galactosidase (Streptomyces bingchenggensis (strain BCW-1)).